Here is a 66-residue protein sequence, read N- to C-terminus: Large ribosomal subunit protein bL35 (66 aa).

Composition is skewed to basic residues over residues Met1–Lys15 and His24–Gln40. The disordered stretch occupies residues Met1–Gln40.

The protein belongs to the bacterial ribosomal protein bL35 family.

The sequence is that of Large ribosomal subunit protein bL35 from Bradyrhizobium sp. (strain ORS 278).